A 322-amino-acid polypeptide reads, in one-letter code: 4-diphosphocytidyl-2-C-methyl-D-erythritol kinase (322 aa).

Lys-25 is an active-site residue. 110-120 lines the ATP pocket; that stretch reads PVAGGMAGGSA. Asp-152 is an active-site residue.

The protein belongs to the GHMP kinase family. IspE subfamily.

The enzyme catalyses 4-CDP-2-C-methyl-D-erythritol + ATP = 4-CDP-2-C-methyl-D-erythritol 2-phosphate + ADP + H(+). The protein operates within isoprenoid biosynthesis; isopentenyl diphosphate biosynthesis via DXP pathway; isopentenyl diphosphate from 1-deoxy-D-xylulose 5-phosphate: step 3/6. In terms of biological role, catalyzes the phosphorylation of the position 2 hydroxy group of 4-diphosphocytidyl-2C-methyl-D-erythritol. The sequence is that of 4-diphosphocytidyl-2-C-methyl-D-erythritol kinase from Mycolicibacterium vanbaalenii (strain DSM 7251 / JCM 13017 / BCRC 16820 / KCTC 9966 / NRRL B-24157 / PYR-1) (Mycobacterium vanbaalenii).